The sequence spans 115 residues: Probable 4-amino-4-deoxy-L-arabinose-phosphoundecaprenol flippase subunit ArnE (115 aa).

Helical transmembrane passes span Pro42–Leu62, Val65–Ala85, and Val93–Gly112. The region spanning Leu46–Arg113 is the EamA domain.

This sequence belongs to the ArnE family. In terms of assembly, heterodimer of ArnE and ArnF.

It localises to the cell inner membrane. The protein operates within bacterial outer membrane biogenesis; lipopolysaccharide biosynthesis. Its function is as follows. Translocates 4-amino-4-deoxy-L-arabinose-phosphoundecaprenol (alpha-L-Ara4N-phosphoundecaprenol) from the cytoplasmic to the periplasmic side of the inner membrane. This is Probable 4-amino-4-deoxy-L-arabinose-phosphoundecaprenol flippase subunit ArnE from Pseudomonas aeruginosa (strain UCBPP-PA14).